We begin with the raw amino-acid sequence, 422 residues long: Glutamyl-tRNA reductase (422 aa).

Substrate is bound by residues 49-52 (TCNR), Ser107, 112-114 (EPQ), and Gln118. Cys50 serves as the catalytic Nucleophile. 187–192 (GAGETI) lines the NADP(+) pocket.

This sequence belongs to the glutamyl-tRNA reductase family. In terms of assembly, homodimer.

It catalyses the reaction (S)-4-amino-5-oxopentanoate + tRNA(Glu) + NADP(+) = L-glutamyl-tRNA(Glu) + NADPH + H(+). Its pathway is porphyrin-containing compound metabolism; protoporphyrin-IX biosynthesis; 5-aminolevulinate from L-glutamyl-tRNA(Glu): step 1/2. Its function is as follows. Catalyzes the NADPH-dependent reduction of glutamyl-tRNA(Glu) to glutamate 1-semialdehyde (GSA). This is Glutamyl-tRNA reductase from Pseudomonas aeruginosa (strain ATCC 15692 / DSM 22644 / CIP 104116 / JCM 14847 / LMG 12228 / 1C / PRS 101 / PAO1).